The following is a 161-amino-acid chain: Nucleotide-binding protein Aave_1854 (161 aa).

Belongs to the YajQ family.

Nucleotide-binding protein. The sequence is that of Nucleotide-binding protein Aave_1854 from Paracidovorax citrulli (strain AAC00-1) (Acidovorax citrulli).